The chain runs to 504 residues: Deoxyguanosinetriphosphate triphosphohydrolase (504 aa).

An HD domain is found at 66-273 (RLTHSMEVQQ…MEAADDISYC (208 aa)).

It belongs to the dGTPase family. Type 1 subfamily. As to quaternary structure, homotetramer. Mg(2+) serves as cofactor.

The enzyme catalyses dGTP + H2O = 2'-deoxyguanosine + triphosphate + H(+). Its function is as follows. dGTPase preferentially hydrolyzes dGTP over the other canonical NTPs. In Citrobacter koseri (strain ATCC BAA-895 / CDC 4225-83 / SGSC4696), this protein is Deoxyguanosinetriphosphate triphosphohydrolase.